The sequence spans 72 residues: Protein Kish (72 aa).

A signal peptide spans 1 to 26 (MSALFNFRSLLQVILLLICSCSYVHG). The Lumenal portion of the chain corresponds to 27-53 (QWPSLLDRYKNHEVLGAFWKMARVGER). The chain crosses the membrane as a helical span at residues 54-72 (ASPYVSLACILMAISQFNS).

It belongs to the KISH family.

The protein localises to the endoplasmic reticulum membrane. It localises to the golgi apparatus membrane. Involved in the early part of the secretory pathway. This chain is Protein Kish, found in Saccharomyces cerevisiae (strain ATCC 204508 / S288c) (Baker's yeast).